Consider the following 206-residue polypeptide: Recombination protein RecR (206 aa).

The C4-type zinc finger occupies 60 to 75 (CARCNTFCEGGLCDIC). The Toprim domain occupies 83–178 (RRLMVVHMPA…KVSRLSQGIP (96 aa)).

It belongs to the RecR family.

Its function is as follows. May play a role in DNA repair. It seems to be involved in an RecBC-independent recombinational process of DNA repair. It may act with RecF and RecO. The sequence is that of Recombination protein RecR from Neisseria gonorrhoeae (strain NCCP11945).